The chain runs to 130 residues: Small ribosomal subunit protein uS8 (130 aa).

It belongs to the universal ribosomal protein uS8 family.

The sequence is that of Small ribosomal subunit protein uS8 (RPS22A) from Eremothecium gossypii (strain ATCC 10895 / CBS 109.51 / FGSC 9923 / NRRL Y-1056) (Yeast).